The chain runs to 488 residues: Protein nucleotidyltransferase YdiU (488 aa).

The ATP site is built by Gly-91, Gly-93, Arg-94, Lys-114, Asp-126, Gly-127, Arg-177, and Arg-184. The active-site Proton acceptor is the Asp-253. 2 residues coordinate Mg(2+): Asn-254 and Asp-263. Residue Asp-263 coordinates ATP.

This sequence belongs to the SELO family. Mg(2+) is required as a cofactor. Mn(2+) serves as cofactor.

The enzyme catalyses L-seryl-[protein] + ATP = 3-O-(5'-adenylyl)-L-seryl-[protein] + diphosphate. The catalysed reaction is L-threonyl-[protein] + ATP = 3-O-(5'-adenylyl)-L-threonyl-[protein] + diphosphate. It catalyses the reaction L-tyrosyl-[protein] + ATP = O-(5'-adenylyl)-L-tyrosyl-[protein] + diphosphate. It carries out the reaction L-histidyl-[protein] + UTP = N(tele)-(5'-uridylyl)-L-histidyl-[protein] + diphosphate. The enzyme catalyses L-seryl-[protein] + UTP = O-(5'-uridylyl)-L-seryl-[protein] + diphosphate. The catalysed reaction is L-tyrosyl-[protein] + UTP = O-(5'-uridylyl)-L-tyrosyl-[protein] + diphosphate. In terms of biological role, nucleotidyltransferase involved in the post-translational modification of proteins. It can catalyze the addition of adenosine monophosphate (AMP) or uridine monophosphate (UMP) to a protein, resulting in modifications known as AMPylation and UMPylation. In Bacillus cereus (strain B4264), this protein is Protein nucleotidyltransferase YdiU.